A 182-amino-acid chain; its full sequence is MSGFVPSEIFFTRGVGRGETQLESFEAALRDAGIAQFNLSSISSIFPPHAKMVSKEEGLKKLSPGQILFTVLARNTSNELNRMISAAIGYAIPRDKSKWGYLSEHHSFGETEKVAGSFAEKLAAEMLSSTFGSTSQLIYDKEKEEYVLEDKILTTGNISATAVVLSHDEWTTVVAAAVLIVE.

A Pyruvic acid (Ser) modification is found at Ser44.

The protein belongs to the PdaD family. Requires pyruvate as cofactor.

It catalyses the reaction L-arginine + H(+) = agmatine + CO2. The polypeptide is Pyruvoyl-dependent arginine decarboxylase (Thermoplasma volcanium (strain ATCC 51530 / DSM 4299 / JCM 9571 / NBRC 15438 / GSS1)).